The sequence spans 259 residues: Putative protein-tyrosine sulfotransferase (259 aa).

Cysteine 13 and cysteine 68 are disulfide-bonded. Glutamate 16 functions as the Proton donor/acceptor in the catalytic mechanism. Asparagine 36 carries an N-linked (GlcNAc...) asparagine glycan. 3 residues coordinate 3'-phosphoadenylyl sulfate: arginine 95, serine 103, and arginine 107. The N-linked (GlcNAc...) asparagine glycan is linked to asparagine 115. Cysteines 137 and 144 form a disulfide. 3'-phosphoadenylyl sulfate-binding positions include tyrosine 149 and 194 to 203 (SASQVKNSIN).

The protein belongs to the protein sulfotransferase family.

It carries out the reaction L-tyrosyl-[protein] + 3'-phosphoadenylyl sulfate = O-sulfo-L-tyrosine-[protein] + adenosine 3',5'-bisphosphate + H(+). In terms of biological role, catalyzes the O-sulfation of tyrosine residues within acidic motifs of polypeptides, using 3'-phosphoadenylyl sulfate (PAPS) as cosubstrate. The sequence is that of Putative protein-tyrosine sulfotransferase (tpst-2) from Caenorhabditis elegans.